Reading from the N-terminus, the 234-residue chain is Phosphoglycolate phosphatase (234 aa).

Aspartate 8 functions as the Nucleophile in the catalytic mechanism. Residues aspartate 8 and aspartate 10 each coordinate Mg(2+). Lysine 157 contributes to the substrate binding site. Positions 180 and 184 each coordinate Mg(2+).

This sequence belongs to the archaeal SPP-like hydrolase family. The cofactor is Mg(2+).

The enzyme catalyses 2-phosphoglycolate + H2O = glycolate + phosphate. Its function is as follows. Catalyzes the dephosphorylation of 2-phosphoglycolate. In Methanoculleus marisnigri (strain ATCC 35101 / DSM 1498 / JR1), this protein is Phosphoglycolate phosphatase.